The following is a 309-amino-acid chain: p-hydroxybenzoic acid efflux pump subunit AaeA (309 aa).

Residues 12 to 32 traverse the membrane as a helical segment; it reads AITVVLVILAFIAIFNAWVYY.

The protein belongs to the membrane fusion protein (MFP) (TC 8.A.1) family.

It localises to the cell inner membrane. Forms an efflux pump with AaeB. The chain is p-hydroxybenzoic acid efflux pump subunit AaeA from Escherichia coli O157:H7.